A 70-amino-acid polypeptide reads, in one-letter code: Large ribosomal subunit protein bL31 (70 aa).

Positions 16, 18, 37, and 40 each coordinate Zn(2+).

It belongs to the bacterial ribosomal protein bL31 family. Type A subfamily. Part of the 50S ribosomal subunit. Zn(2+) is required as a cofactor.

In terms of biological role, binds the 23S rRNA. This is Large ribosomal subunit protein bL31 from Enterobacter sp. (strain 638).